A 64-amino-acid polypeptide reads, in one-letter code: Large ribosomal subunit protein bL35c (64 aa).

This sequence belongs to the bacterial ribosomal protein bL35 family.

Its subcellular location is the plastid. The protein localises to the chloroplast. The chain is Large ribosomal subunit protein bL35c from Trieres chinensis (Marine centric diatom).